We begin with the raw amino-acid sequence, 160 residues long: Lipoprotein signal peptidase (160 aa).

Helical transmembrane passes span 60–80 (TEWL…AFFL) and 84–104 (LPFL…AGTI). Catalysis depends on residues D118 and D132. The chain crosses the membrane as a helical span at residues 127–147 (TFNMADSCLTLGIIWLVLLYL).

Belongs to the peptidase A8 family.

It is found in the cell membrane. It catalyses the reaction Release of signal peptides from bacterial membrane prolipoproteins. Hydrolyzes -Xaa-Yaa-Zaa-|-(S,diacylglyceryl)Cys-, in which Xaa is hydrophobic (preferably Leu), and Yaa (Ala or Ser) and Zaa (Gly or Ala) have small, neutral side chains.. It participates in protein modification; lipoprotein biosynthesis (signal peptide cleavage). Its function is as follows. This protein specifically catalyzes the removal of signal peptides from prolipoproteins. The polypeptide is Lipoprotein signal peptidase (Dehalococcoides mccartyi (strain ATCC BAA-2266 / KCTC 15142 / 195) (Dehalococcoides ethenogenes (strain 195))).